Consider the following 355-residue polypeptide: Peptide chain release factor 1 (355 aa).

Residue Gln-232 is modified to N5-methylglutamine.

Belongs to the prokaryotic/mitochondrial release factor family. Post-translationally, methylated by PrmC. Methylation increases the termination efficiency of RF1.

It localises to the cytoplasm. Its function is as follows. Peptide chain release factor 1 directs the termination of translation in response to the peptide chain termination codons UAG and UAA. This chain is Peptide chain release factor 1, found in Kineococcus radiotolerans (strain ATCC BAA-149 / DSM 14245 / SRS30216).